The sequence spans 116 residues: NADH-ubiquinone oxidoreductase chain 3 (116 aa).

The next 3 helical transmembrane spans lie at Val8–Leu28, Phe56–Leu76, and Thr88–Phe108.

The protein belongs to the complex I subunit 3 family.

The protein localises to the mitochondrion membrane. It carries out the reaction a ubiquinone + NADH + 5 H(+)(in) = a ubiquinol + NAD(+) + 4 H(+)(out). Functionally, core subunit of the mitochondrial membrane respiratory chain NADH dehydrogenase (Complex I) that is believed to belong to the minimal assembly required for catalysis. Complex I functions in the transfer of electrons from NADH to the respiratory chain. The immediate electron acceptor for the enzyme is believed to be ubiquinone. In Scyliorhinus canicula (Small-spotted catshark), this protein is NADH-ubiquinone oxidoreductase chain 3 (MT-ND3).